The primary structure comprises 51 residues: Large ribosomal subunit protein bL33 (51 aa).

The protein belongs to the bacterial ribosomal protein bL33 family.

This is Large ribosomal subunit protein bL33 from Vesicomyosocius okutanii subsp. Calyptogena okutanii (strain HA).